Here is a 211-residue protein sequence, read N- to C-terminus: MRLGRDMLAPAARLASSRCLGSLARATARKAARSGPDRLLTSRRRFIIDSRRWGRPKTGPNPTDRARPGSKHHIVTDANGTPLAAILTGANVNDVTQLLPLIDAIPPIRGLRGHPLQRPRVVYADRGYDSERHRRALRDRGIEPVIAKRRTEHGSGLGKYRWVVERTHAWLHHFRRLRIRFERRADIHGAFLKLGCCLICWNTLRRADQSL.

Residues 51–71 are disordered; the sequence is RRWGRPKTGPNPTDRARPGSK.

It belongs to the transposase 11 family.

Its function is as follows. Involved in the transposition of the insertion sequence. The sequence is that of Putative transposase for insertion sequence element IS402 from Burkholderia cepacia (Pseudomonas cepacia).